The primary structure comprises 258 residues: Trans-aconitate 2-methyltransferase (258 aa).

The protein belongs to the methyltransferase superfamily. Tam family.

Its subcellular location is the cytoplasm. It carries out the reaction trans-aconitate + S-adenosyl-L-methionine = (E)-3-(methoxycarbonyl)pent-2-enedioate + S-adenosyl-L-homocysteine. Catalyzes the S-adenosylmethionine monomethyl esterification of trans-aconitate. In Acidovorax sp. (strain JS42), this protein is Trans-aconitate 2-methyltransferase.